The following is a 445-amino-acid chain: C4-dicarboxylate transport protein (445 aa).

8 consecutive transmembrane segments (helical) span residues 24–44 (VLYV…WVSP), 62–82 (LIKM…IAHI), 105–125 (FALI…GLAA), 163–183 (GDIL…MALG), 201–221 (FGVI…AMAF), 237–257 (LVAL…GLIA), 322–342 (IYMT…LTFT), and 370–390 (AGTL…VFSI).

It belongs to the dicarboxylate/amino acid:cation symporter (DAACS) (TC 2.A.23) family.

It localises to the cell inner membrane. Functionally, responsible for the transport of dicarboxylates such as succinate, fumarate, and malate from the periplasm across the membrane. The protein is C4-dicarboxylate transport protein of Rhodopseudomonas palustris (strain BisB5).